Reading from the N-terminus, the 344-residue chain is L-sulfolactate dehydrogenase (344 aa).

This sequence belongs to the LDH2/MDH2 oxidoreductase family.

The protein resides in the cytoplasm. The catalysed reaction is a (2S)-2-hydroxycarboxylate + NAD(+) = a 2-oxocarboxylate + NADH + H(+). The protein operates within cofactor biosynthesis; coenzyme M biosynthesis; sulfoacetaldehyde from phosphoenolpyruvate and sulfite: step 3/4. It participates in cofactor biosynthesis; 5,6,7,8-tetrahydromethanopterin biosynthesis. Functionally, catalyzes the reduction of sulfopyruvate to (R)-sulfolactate much more efficiently than the reverse reaction. Also catalyzes the reduction of oxaloacetate, alpha-ketoglutarate, and to a much lower extent, KHTCA, but not pyruvate. Involved in the biosynthesis of both coenzyme M (with (R)-sulfolactate) and methanopterin (with alpha-ketoglutarate). This chain is L-sulfolactate dehydrogenase (comC), found in Methanocaldococcus jannaschii (strain ATCC 43067 / DSM 2661 / JAL-1 / JCM 10045 / NBRC 100440) (Methanococcus jannaschii).